A 393-amino-acid chain; its full sequence is tRNA(Met) cytidine acetate ligase (393 aa).

ATP contacts are provided by glycine 81, asparagine 142, and arginine 167.

This sequence belongs to the TmcAL family.

It localises to the cytoplasm. The enzyme catalyses cytidine(34) in elongator tRNA(Met) + acetate + ATP = N(4)-acetylcytidine(34) in elongator tRNA(Met) + AMP + diphosphate. In terms of biological role, catalyzes the formation of N(4)-acetylcytidine (ac(4)C) at the wobble position of elongator tRNA(Met), using acetate and ATP as substrates. First activates an acetate ion to form acetyladenylate (Ac-AMP) and then transfers the acetyl group to tRNA to form ac(4)C34. This is tRNA(Met) cytidine acetate ligase from Bacillus cereus (strain Q1).